We begin with the raw amino-acid sequence, 272 residues long: MSRHSNTPATDASVLLVQLSDSHLFAEDGARLLGMDTAHSLEKVVERVAREQPRIDLILATGDVSQDGSLDSYTRFRRLSAPLAAPLRWFAGNHDEREPMQRATEGSDLLEQIVDVGNWRVVLLDSSIPGAVPGYLEDDQLDLLRRAIDSAGERFLLVSFHHHPVPIGSDWMDPIGLRNPQALFDLLAPYPQLRCLLWGHIHQEFDRQRGPLRLLASPSTCVQFAPGSSDFTLDRLAPGYRWLRLHDDGRLETGISRVDDVVFEVDYDTAGY.

Positions 21, 23, 63, 93, 161, 200, and 202 each coordinate Fe cation. Residues H23, D63, and 93 to 94 (NH) contribute to the AMP site. H202 contributes to the AMP binding site.

This sequence belongs to the cyclic nucleotide phosphodiesterase class-III family. As to quaternary structure, monomer. It depends on a divalent metal cation as a cofactor.

The catalysed reaction is 3',5'-cyclic AMP + H2O = AMP + H(+). Its activity is regulated as follows. Activated by iron. Other divalent metal ions have no effect. Functionally, hydrolyzes cAMP to 5'-AMP. Plays an important regulatory role in modulating the intracellular concentration of cAMP, thereby influencing cAMP-dependent processes. Specifically required for regulation of virulence factors. Can also hydrolyze cGMP, but cGMP is unlikely to be synthesized by P.aeruginosa and cAMP is probably the biologically relevant substrate for CpdA in vivo. This chain is 3',5'-cyclic adenosine monophosphate phosphodiesterase CpdA, found in Pseudomonas aeruginosa.